Consider the following 121-residue polypeptide: Large ribosomal subunit protein bL19 (121 aa).

The protein belongs to the bacterial ribosomal protein bL19 family.

In terms of biological role, this protein is located at the 30S-50S ribosomal subunit interface and may play a role in the structure and function of the aminoacyl-tRNA binding site. The protein is Large ribosomal subunit protein bL19 of Bifidobacterium adolescentis (strain ATCC 15703 / DSM 20083 / NCTC 11814 / E194a).